A 290-amino-acid polypeptide reads, in one-letter code: Glycine--tRNA ligase alpha subunit (290 aa).

It belongs to the class-II aminoacyl-tRNA synthetase family. Tetramer of two alpha and two beta subunits.

It localises to the cytoplasm. It carries out the reaction tRNA(Gly) + glycine + ATP = glycyl-tRNA(Gly) + AMP + diphosphate. In Synechococcus sp. (strain CC9902), this protein is Glycine--tRNA ligase alpha subunit.